The following is a 275-amino-acid chain: T cell receptor alpha chain MC.7.G5 (275 aa).

A signal peptide spans 1–21 (MACPGFLWALVISTCLEFSMA). Positions 22 to 116 (QTVTQSQPEM…AAMYFCAYRS (95 aa)) constitute an Ig-like V-type domain. The tract at residues 22–116 (QTVTQSQPEM…AAMYFCAYRS (95 aa)) is t cell receptor alpha variable 38-2DV8. An intrachain disulfide couples Cys43 to Cys112. A CDR1 region spans residues 47–53 (TSESDYY). The segment at 71–81 (QEAYKQQNATE) is CDR2. A glycan (N-linked (GlcNAc...) asparagine) is linked at Asn78. The interval 112 to 124 (CAYRSAVNARLMF) is CDR3. The t cell receptor alpha joining 31 stretch occupies residues 119–134 (NARLMFGDGTQLVVKP). The segment at 136–275 (IQNPDPAVYQ…LLMTLRLWSS (140 aa)) is t cell receptor alpha constant. An Ig-like C1-type domain is found at 154 to 242 (KSVCLFTDFD…LVEKSFETDT (89 aa)). A disulfide bridge connects residues Cys157 and Cys207. 4 N-linked (GlcNAc...) asparagine glycosylation sites follow: Asn167, Asn201, Asn212, and Asn248. The segment at 229–250 (CDVKLVEKSFETDTNLNFQNLS) is connecting peptide. A helical transmembrane segment spans residues 251–273 (VIGFRILLLKVAGFNLLMTLRLW). The Cytoplasmic segment spans residues 274-275 (SS).

As to quaternary structure, disulfide-linked heterodimer with TRBV25-1*01J2S3*01C2*01 beta chain. The alpha-beta TR associates with the transmembrane signaling CD3 coreceptor proteins to form the TR-CD3 (TCR). The assembly of alpha-beta TR heterodimers with CD3 occurs in the endoplasmic reticulum where a single alpha-beta TR heterodimer associates with one CD3D-CD3E heterodimer, one CD3G-CD3E heterodimer and one CD247 homodimer forming a stable octameric structure. CD3D-CD3E and CD3G-CD3E heterodimers preferentially associate with TR alpha and TR beta chains (via TM domain), respectively. The association of the CD247 homodimer is the last step of TCR assembly in the endoplasmic reticulum and is required for transport to the cell surface. In terms of tissue distribution, expressed in MR1-restricted CD8-positive T cells.

The protein resides in the cell membrane. Functionally, the alpha chain of TRAV38-2DV8*01J31*01C*01/TRBV25-1*01J2S3*01C2*01 alpha-beta T cell receptor (TR) clonotype that displays pan-cancer cell recognition via the invariant MR1 molecule. On CD8-positive T cell clone MC.7.G5, likely recognizes tumor-specific or -associated metabolite(s) essential for cancer cell survival, triggering killing of many cancer cell types including lung, melanoma, leukemia, colon, breast, prostate, bone and ovarian cancer cells. Mediates cancer cell cytotoxicity in an HLA-independent manner. Has no reactivity to healthy cells, even stressed or infected by bacteria. Antigen recognition initiates TR-CD3 clustering on the cell surface and intracellular activation of LCK that phosphorylates the ITAM motifs of CD3G, CD3D, CD3E and CD247 enabling the recruitment of ZAP70. In turn, ZAP70 phosphorylates LAT, which recruits numerous signaling molecules to form the LAT signalosome. The LAT signalosome propagates signal branching to three major signaling pathways, the calcium, the mitogen-activated protein kinase (MAPK) kinase and the nuclear factor NF-kappa-B (NF-kB) pathways, leading to the mobilization of transcription factors that are critical for gene expression and essential for T cell differentiation into effector/memory T cells. This chain is T cell receptor alpha chain MC.7.G5, found in Homo sapiens (Human).